The primary structure comprises 38 residues: Large ribosomal subunit protein bL36 (38 aa).

This sequence belongs to the bacterial ribosomal protein bL36 family.

The chain is Large ribosomal subunit protein bL36 from Aster yellows witches'-broom phytoplasma (strain AYWB).